Here is a 710-residue protein sequence, read N- to C-terminus: Prolyl endopeptidase (710 aa).

Methionine 1 bears the N-acetylmethionine mark. Lysine 157 bears the N6-acetyllysine mark. Active-site charge relay system residues include serine 554, aspartate 641, and histidine 680.

Belongs to the peptidase S9A family.

Its subcellular location is the cytoplasm. The enzyme catalyses Hydrolysis of Pro-|-Xaa &gt;&gt; Ala-|-Xaa in oligopeptides.. Cleaves peptide bonds on the C-terminal side of prolyl residues within peptides that are up to approximately 30 amino acids long. In Mus musculus (Mouse), this protein is Prolyl endopeptidase (Prep).